The chain runs to 297 residues: Protease HtpX homolog (297 aa).

2 consecutive transmembrane segments (helical) span residues isoleucine 14–leucine 34 and serine 38–valine 58. Histidine 144 is a binding site for Zn(2+). Glutamate 145 is an active-site residue. Histidine 148 contacts Zn(2+). 2 helical membrane-spanning segments follow: residues isoleucine 159–phenylalanine 179 and isoleucine 199–isoleucine 219. Glutamate 228 provides a ligand contact to Zn(2+).

The protein belongs to the peptidase M48B family. Requires Zn(2+) as cofactor.

The protein resides in the cell membrane. This is Protease HtpX homolog from Leuconostoc mesenteroides subsp. mesenteroides (strain ATCC 8293 / DSM 20343 / BCRC 11652 / CCM 1803 / JCM 6124 / NCDO 523 / NBRC 100496 / NCIMB 8023 / NCTC 12954 / NRRL B-1118 / 37Y).